A 388-amino-acid polypeptide reads, in one-letter code: Na(+)/H(+) antiporter NhaA (388 aa).

At 1–11 the chain is on the cytoplasmic side; the sequence is MKHLHRFFSSD. The chain crosses the membrane as a helical span at residues 12–31; that stretch reads ASGGIILIIAAILAMMMANS. Residues 32–58 are Periplasmic-facing; sequence GATSGWYHDFLETPVQLRVGSLEINKN. Residues 59–80 form a helical membrane-spanning segment; that stretch reads MLLWINDALMAVFFLLVGLEVK. The Cytoplasmic portion of the chain corresponds to 81-96; that stretch reads RELMQGSLASLRQAAF. A helical transmembrane segment spans residues 97-116; that stretch reads PVIAAIGGMIVPALLYLAFN. At 117-122 the chain is on the periplasmic side; sequence YADPIT. A helical membrane pass occupies residues 123–130; the sequence is REGWAIPA. At 131–154 the chain is on the cytoplasmic side; that stretch reads ATDIAFALGVLALLGSRVPLALKI. The helical transmembrane segment at 155–176 threads the bilayer; it reads FLMALAIIDDLGAIIIIALFYT. Topologically, residues 177–180 are periplasmic; it reads NDLS. A helical transmembrane segment spans residues 181–200; it reads MASLGVAAVAIAVLAVLNLC. The Cytoplasmic portion of the chain corresponds to 201-204; that stretch reads GVRR. Residues 205–222 traverse the membrane as a helical segment; it reads TGVYILVGVVLWTAVLKS. Gly223 is a topological domain (periplasmic). The helical transmembrane segment at 224 to 236 threads the bilayer; that stretch reads VHATLAGVIVGFF. Residues 237 to 253 are Cytoplasmic-facing; it reads IPLKEKHGRSPAKRLEH. The chain crosses the membrane as a helical span at residues 254 to 272; it reads VLHPWVAYLILPLFAFANA. The Periplasmic segment spans residues 273 to 286; it reads GVSLQGVTLDGLTS. A helical transmembrane segment spans residues 287-310; sequence ILPLGIIAGLLIGKPLGISLFCWL. At 311–339 the chain is on the cytoplasmic side; the sequence is ALRLKLAHLPEGTTYQQIMAVGILCGIGF. Residues 340-350 form a helical membrane-spanning segment; sequence TMSIFIASLAF. The Periplasmic segment spans residues 351 to 357; sequence GSVDPEL. A helical membrane pass occupies residues 358–380; sequence INWAKLGILVGSISSAVIGYSWL. Residues 381–388 lie on the Cytoplasmic side of the membrane; sequence RVRLRPSV.

It belongs to the NhaA Na(+)/H(+) (TC 2.A.33) antiporter family.

The protein resides in the cell inner membrane. It catalyses the reaction Na(+)(in) + 2 H(+)(out) = Na(+)(out) + 2 H(+)(in). Na(+)/H(+) antiporter that extrudes sodium in exchange for external protons. This Shigella boydii serotype 4 (strain Sb227) protein is Na(+)/H(+) antiporter NhaA.